The chain runs to 101 residues: Small ribosomal subunit protein uS14 (101 aa).

It belongs to the universal ribosomal protein uS14 family. Part of the 30S ribosomal subunit. Contacts proteins S3 and S10.

Binds 16S rRNA, required for the assembly of 30S particles and may also be responsible for determining the conformation of the 16S rRNA at the A site. In Neorickettsia sennetsu (strain ATCC VR-367 / Miyayama) (Ehrlichia sennetsu), this protein is Small ribosomal subunit protein uS14.